Here is a 269-residue protein sequence, read N- to C-terminus: Voltage-gated hydrogen channel 1 (269 aa).

Residues 1-96 (MTSHDPKAVT…RLRKLFSSHR (96 aa)) are Cytoplasmic-facing. At threonine 29 the chain carries Phosphothreonine. Residues 46 to 79 (ENEEEEEEPAPTSAEGEGNAEGPDAEAGSASTPR) are disordered. Serine 93 is modified (phosphoserine). Residues 97–117 (FQVIIICLVVLDALLVLAELL) traverse the membrane as a helical segment. Topologically, residues 118-134 (LDLKIIEPDEQDYAVTA) are extracellular. A helical transmembrane segment spans residues 135–157 (FHYMSFAILVFFMLEIFFKIFVF). The Cytoplasmic portion of the chain corresponds to 158-165 (RLEFFHHK). A helical membrane pass occupies residues 166–186 (FEILDAFVVVVSFVLDLVLLF). The Extracellular segment spans residues 187–193 (KSHHFEA). A helical membrane pass occupies residues 194–214 (LGLLILLRLWRVARIINGIII). The Cytoplasmic portion of the chain corresponds to 215-269 (SVKTRSERQILRLKQINIQLATKIQHLEFSCSEKEQEIERLNKLLKQNGLLGDVN). Positions 221 to 261 (ERQILRLKQINIQLATKIQHLEFSCSEKEQEIERLNKLLKQ) form a coiled coil.

It belongs to the voltage-gated proton channel (VPC) (TC 1.A.51) family. In terms of assembly, homodimer; each protomer forms its own proton conduction pathway. In terms of processing, phosphorylated in vitro by PRKCD. Phosphorylation may enhance channel gating. Enriched in immune tissues, such as bone marrow, macrophages and spleen.

The protein resides in the cell membrane. It localises to the apical cell membrane. The protein localises to the cytoplasmic vesicle. It is found in the phagosome membrane. Its subcellular location is the cell projection. The protein resides in the cilium. It localises to the flagellum membrane. The enzyme catalyses H(+)(in) = H(+)(out). With respect to regulation, the dimers display cooperative channel gating. The channel activity is inhibited by zinc ions. Voltage-gated proton-selective channel that conducts outward proton currents in response to intracellular acidification. Lacks a canonical ion-channel pore domain and mediates proton permeability via its voltage sensor domain. Provides for proton efflux that compensates for electron charge generated by NADPH oxidase activity either in the extracellular or phagosomal compartments, thus enabling the production of high levels of bactericidal reactive oxygen species during the respiratory burst. Opens when the pH of airway surface liquid exceeds 7 and contributes to respiratory epithelial acid secretion to maintain pH in the mucosa. This is Voltage-gated hydrogen channel 1 from Mus musculus (Mouse).